Consider the following 138-residue polypeptide: Phosphoribosyl-AMP cyclohydrolase (138 aa).

The disordered stretch occupies residues 1 to 23 (MSEQSAPSPTPAAELSSDPASPL). D100 contacts Mg(2+). C101 contributes to the Zn(2+) binding site. Residues D102 and D104 each coordinate Mg(2+). Positions 117 and 124 each coordinate Zn(2+).

Belongs to the PRA-CH family. Homodimer. It depends on Mg(2+) as a cofactor. Zn(2+) is required as a cofactor.

It is found in the cytoplasm. It carries out the reaction 1-(5-phospho-beta-D-ribosyl)-5'-AMP + H2O = 1-(5-phospho-beta-D-ribosyl)-5-[(5-phospho-beta-D-ribosylamino)methylideneamino]imidazole-4-carboxamide. The protein operates within amino-acid biosynthesis; L-histidine biosynthesis; L-histidine from 5-phospho-alpha-D-ribose 1-diphosphate: step 3/9. Catalyzes the hydrolysis of the adenine ring of phosphoribosyl-AMP. This Paenarthrobacter aurescens (strain TC1) protein is Phosphoribosyl-AMP cyclohydrolase.